Reading from the N-terminus, the 486-residue chain is NADH dehydrogenase [ubiquinone] flavoprotein 1, mitochondrial (486 aa).

A mitochondrion-targeting transit peptide spans Met-1 to Phe-30. A compositionally biased stretch (low complexity) spans Ser-31–Thr-40. The interval Ser-31 to Gly-57 is disordered. Residues Pro-41 to Pro-50 are compositionally biased toward pro residues. Position 110 to 119 (Gly-110 to Gly-119) interacts with NADH. FMN is bound at residue Phe-222 to Thr-270. [4Fe-4S] cluster-binding residues include Cys-402, Cys-405, Cys-408, and Cys-448.

Belongs to the complex I 51 kDa subunit family. As to quaternary structure, complex I is composed of at least 49 different subunits. This is a component of the flavoprotein-sulfur (FP) fragment of the enzyme. The cofactor is FMN. It depends on [4Fe-4S] cluster as a cofactor.

It is found in the mitochondrion inner membrane. The catalysed reaction is a ubiquinone + NADH + 5 H(+)(in) = a ubiquinol + NAD(+) + 4 H(+)(out). Core subunit of the mitochondrial membrane respiratory chain NADH dehydrogenase (Complex I) that is believed to belong to the minimal assembly required for catalysis. Complex I functions in the transfer of electrons from NADH to the respiratory chain. The immediate electron acceptor for the enzyme is believed to be ubiquinone. This chain is NADH dehydrogenase [ubiquinone] flavoprotein 1, mitochondrial, found in Arabidopsis thaliana (Mouse-ear cress).